Here is a 464-residue protein sequence, read N- to C-terminus: Glycine receptor subunit alpha-3 (464 aa).

The first 33 residues, 1–33 (MAHVRHFRTLLSGFYFWEAALLLSLVATKETNS), serve as a signal peptide directing secretion. At 34–255 (ARSRSAPMSP…RFHLERQMGY (222 aa)) the chain is on the extracellular side. N-linked (GlcNAc...) asparagine glycosylation is present at Asn-71. Cys-171 and Cys-185 form a disulfide bridge. 2 residues coordinate Zn(2+): Glu-225 and Asp-227. Cysteines 231 and 242 form a disulfide. 235 to 240 (YNTGKF) lines the strychnine pocket. Zn(2+) is bound at residue His-248. The helical transmembrane segment at 256 to 277 (YLIQMYIPSLLIVILSWVSFWI) threads the bilayer. Topologically, residues 278–282 (NMDAA) are cytoplasmic. Residues 283-303 (PARVALGITTVLTMTTQSSGS) form a helical membrane-spanning segment. Residues 304-314 (RASLPKVSYVK) are Extracellular-facing. A helical membrane pass occupies residues 315 to 335 (AIDIWMAVCLLFVFSALLEYA). The Cytoplasmic portion of the chain corresponds to 336 to 430 (AVNFVSRQHK…FIDRAKKIDT (95 aa)). Ser-370 is modified (phosphoserine). The residue at position 379 (Ser-379) is a Phosphoserine; by PKA. A helical membrane pass occupies residues 431 to 451 (ISRACFPLAFLIFNIFYWVIY). The Extracellular portion of the chain corresponds to 452–464 (KILRHEDIHHQQD).

The protein belongs to the ligand-gated ion channel (TC 1.A.9) family. Glycine receptor (TC 1.A.9.3) subfamily. GLRA3 sub-subfamily. Homopentamer (in vitro). Heteropentamer composed of GLRA3 and GLRB. Both homopentamers and heteropentamers form functional ion channels, but their characteristics are subtly different. Phosphorylated by PKA; this causes down-regulation of channel activity.

It localises to the postsynaptic cell membrane. The protein localises to the perikaryon. It is found in the cell projection. Its subcellular location is the dendrite. The protein resides in the synapse. It localises to the cell membrane. The catalysed reaction is chloride(in) = chloride(out). Low levels of Zn(2+) ions (1 uM) increase glycine sensitivity and decrease the glycine concentration required for half-maximal channel activity. Channel activity is strongly enhanced by ethanol. Inhibited by picrotoxin. Inhibited by prostaglandin E2, probably via PKA-mediated phosphorylation at Ser-379. Glycine receptors are ligand-gated chloride channels. Channel opening is triggered by extracellular glycine. Channel characteristics depend on the subunit composition; heteropentameric channels display faster channel closure. Plays an important role in the down-regulation of neuronal excitability. Contributes to the generation of inhibitory postsynaptic currents. Contributes to increased pain perception in response to increased prostaglandin E2 levels. Plays a role in cellular responses to ethanol. The chain is Glycine receptor subunit alpha-3 (Glra3) from Rattus norvegicus (Rat).